Consider the following 474-residue polypeptide: UDP-N-acetylmuramate--L-alanine ligase (474 aa).

122-128 (GTHGKTT) contacts ATP.

Belongs to the MurCDEF family.

It localises to the cytoplasm. The catalysed reaction is UDP-N-acetyl-alpha-D-muramate + L-alanine + ATP = UDP-N-acetyl-alpha-D-muramoyl-L-alanine + ADP + phosphate + H(+). It functions in the pathway cell wall biogenesis; peptidoglycan biosynthesis. Cell wall formation. In Saccharophagus degradans (strain 2-40 / ATCC 43961 / DSM 17024), this protein is UDP-N-acetylmuramate--L-alanine ligase.